Consider the following 770-residue polypeptide: Molybdenum cofactor sulfurase (770 aa).

N6-(pyridoxal phosphate)lysine is present on Lys-231. Residue Cys-395 is part of the active site. An MOSC domain is found at 601–770; sequence DWVSRALGVS…TVSGVIEESE (170 aa).

The protein belongs to the class-V pyridoxal-phosphate-dependent aminotransferase family. MOCOS subfamily. Pyridoxal 5'-phosphate is required as a cofactor.

The enzyme catalyses Mo-molybdopterin + L-cysteine + AH2 = thio-Mo-molybdopterin + L-alanine + A + H2O. Its function is as follows. Sulfurates the molybdenum cofactor. Sulfation of molybdenum is essential for xanthine dehydrogenase (XDH) and aldehyde oxidase (ADO) enzymes in which molybdenum cofactor is liganded by 1 oxygen and 1 sulfur atom in active form. This chain is Molybdenum cofactor sulfurase, found in Anopheles gambiae (African malaria mosquito).